A 20-amino-acid chain; its full sequence is AEVFKSEEGSVDFYGQLRPA.

The protein belongs to the Gram-negative porin family. As to quaternary structure, homotrimer.

It is found in the cell outer membrane. Forms pores that allow passive diffusion of small molecules across the outer membrane. The sequence is that of Outer membrane protein 40Va from Vibrio alginolyticus.